Here is an 85-residue protein sequence, read N- to C-terminus: Large ribosomal subunit protein bL27 (85 aa).

The interval 1–20 is disordered; the sequence is MAHKKGGGTTRNGRDSESKR.

Belongs to the bacterial ribosomal protein bL27 family.

The polypeptide is Large ribosomal subunit protein bL27 (Herminiimonas arsenicoxydans).